Reading from the N-terminus, the 382-residue chain is tRNA(Met) cytidine acetate ligase (382 aa).

ATP-binding positions include 9 to 22 (VTEY…HAYQ), Gly103, Asn152, and Arg177.

It belongs to the TmcAL family.

The protein localises to the cytoplasm. The enzyme catalyses cytidine(34) in elongator tRNA(Met) + acetate + ATP = N(4)-acetylcytidine(34) in elongator tRNA(Met) + AMP + diphosphate. Its function is as follows. Catalyzes the formation of N(4)-acetylcytidine (ac(4)C) at the wobble position of elongator tRNA(Met), using acetate and ATP as substrates. First activates an acetate ion to form acetyladenylate (Ac-AMP) and then transfers the acetyl group to tRNA to form ac(4)C34. The sequence is that of tRNA(Met) cytidine acetate ligase from Levilactobacillus brevis (strain ATCC 367 / BCRC 12310 / CIP 105137 / JCM 1170 / LMG 11437 / NCIMB 947 / NCTC 947) (Lactobacillus brevis).